Consider the following 893-residue polypeptide: MATCIGEKIEDFRVGNLLGKGSFAGVYRAESIHTGLEVAIKMIDKKAMYKAGMVQRVQNEVKIHCQLKHPSILELYNYFEDNNYVYLVLEMCHNGEMNRYLKNRRKPFSENEARHFMHQIITGMLYLHSHGILHRDLTLSNLLLTRNMNIKIADFGLAAQLKMPHEKHYTLCGTPNYISPEIATRSAHGLESDIWSLGCMFYTLLIGRPPFDTDTVKNTLNKVVLADYEMPTFLSREAKDLIHQLLRRNPADRLSLSSVLDHPFMSRNSSKKSKDLGTVEDSIDSGHATISTAITASSSTSISGSLFDRRRLLIEQPLPNKMTIFPKNKNPSDFSSSGDGISFYTSWGNQEQETSNSGRGRVIQEAEERPHSRYLRRAHSSDRSETSHGQSRVKTYTMERCYSAEMLSKSKRSGVEENERYSPTNNDANIFHFFKEKTSNSSGSFEGPDNNQALSNHLCPGKTPFPFPEQTPQTEMVQQWFGNLQINDPSCEQSKTRGVEPPLVYQKRTLRSITSPLTAYRLKPIRQKTKKAVVSILDSEEVCVELLKDYASQEYVKEVLQISSDGSMITIYYPNDGRGFLLADRPPSPTDNISRYSFDNLPEKYWRKYQYASRFVQLVRSKSPKITYFTRYAKCVLMENSPGADFEVWFYDGAKIHKTEDLIQVIEKTGRSYTLKGESEVNSLKEEVKMYMNHANEGHRICLALESIISEEEKKSGSAPFFPIIVGRRPSSTSSPKALTPPPPVDPNYPMRETPSLNRMIINSAASPKQAPVLNPPVVTNEGLGLMGAASETNSSPRSLKDCLPKSAQLLKSVFVKNVGWATQLTSGAVWVQFNDGSQLVVQAGVSSISYTSPDGQTTRYGENEKLPEYIKQKLQCLSSILLMFSNPTPSFH.

Residues 12 to 265 (FRVGNLLGKG…LSSVLDHPFM (254 aa)) form the Protein kinase domain. ATP is bound by residues 18 to 26 (LGKGSFAGV) and K41. An N6-acetyllysine mark is found at K45 and K46. The active-site Proton acceptor is D136. Residues 349-358 (NQEQETSNSG) show a composition bias toward polar residues. The interval 349 to 393 (NQEQETSNSGRGRVIQEAEERPHSRYLRRAHSSDRSETSHGQSRV) is disordered. Positions 362–371 (VIQEAEERPH) are enriched in basic and acidic residues. Residues S403 and S588 each carry the phosphoserine modification. One can recognise a Cryptic POLO box 1 (CPB1) domain in the interval 509-622 (TLRSITSPLT…SRFVQLVRSK (114 aa)). Residues 623–736 (SPKITYFTRY…GRRPSSTSSP (114 aa)) enclose the Cryptic POLO box 2 (CPB2) domain. The tract at residues 730 to 749 (PSSTSSPKALTPPPPVDPNY) is disordered. The POLO box domain maps to 809-887 (QLLKSVFVKN…LSSILLMFSN (79 aa)).

This sequence belongs to the protein kinase superfamily. Ser/Thr protein kinase family. CDC5/Polo subfamily. As to quaternary structure, homodimer. Interacts with CEP152 (via N-terminus). Interacts with CEP78; this interaction may be important for proper PLK4 localization to the centriole and PLK4-induced overduplication of centrioles. Interacts with CEP131. Interacts simultaneously with TENT5C and CEP192. Interacts with TENT5C; this interaction leads to the TENT5C recruitment in the centrosome. Interacts with CEP85; this interaction may be important in cell migration and centriole assembly. In terms of processing, ubiquitinated; leading to its degradation by the proteasome. Post-translationally, tyrosine-phosphorylated by TEC. Acetylation by KAT2A and KAT2B impairs kinase activity by shifting the kinase to an inactive conformation.

The protein resides in the cytoplasm. Its subcellular location is the cytoskeleton. The protein localises to the microtubule organizing center. It localises to the centrosome. It is found in the centriole. The protein resides in the nucleus. Its subcellular location is the nucleolus. The protein localises to the cleavage furrow. The catalysed reaction is L-seryl-[protein] + ATP = O-phospho-L-seryl-[protein] + ADP + H(+). The enzyme catalyses L-threonyl-[protein] + ATP = O-phospho-L-threonyl-[protein] + ADP + H(+). In terms of biological role, serine/threonine-protein kinase that plays a central role in centriole duplication. Able to trigger procentriole formation on the surface of the parental centriole cylinder, leading to the recruitment of centriole biogenesis proteins such as SASS6, CPAP, CCP110, CEP135 and gamma-tubulin. When overexpressed, it is able to induce centrosome amplification through the simultaneous generation of multiple procentrioles adjoining each parental centriole during S phase. Phosphorylates 'Ser-151' of FBXW5 during the G1/S transition, leading to inhibit FBXW5 ability to ubiquitinate SASS6. Its central role in centriole replication suggests a possible role in tumorigenesis, centrosome aberrations being frequently observed in tumors. Also involved in deuterosome-mediated centriole amplification in multiciliated that can generate more than 100 centrioles. Also involved in trophoblast differentiation by phosphorylating HAND1, leading to disrupt the interaction between HAND1 and MDFIC and activate HAND1. Phosphorylates CDC25C and CHEK2. Required for the recruitment of STIL to the centriole and for STIL-mediated centriole amplification. Phosphorylates CEP131 and PCM1 which is essential for proper organization and integrity of centriolar satellites. The chain is Serine/threonine-protein kinase PLK4 from Bos taurus (Bovine).